Here is a 287-residue protein sequence, read N- to C-terminus: Survival motor neuron protein (287 aa).

Residues 1 to 27 (MGGGGGLPEPEDSVLFRRGTGQSDDSD) are disordered. The P1 (binding site for GEMIN2) stretch occupies residues 8–39 (PEPEDSVLFRRGTGQSDDSDIWDDTALIKAYD). Threonine 20 is subject to Phosphothreonine. 2 positions are modified to phosphoserine: serine 23 and serine 26. Lysine 46 participates in a covalent cross-link: Glycyl lysine isopeptide (Lys-Gly) (interchain with G-Cter in SUMO2). The interval 52 to 83 (GDISEASDKPKSTPKRKPAKKNKSQKKNATTA) is disordered. Residues 63–77 (STPKRKPAKKNKSQK) show a composition bias toward basic residues. Residue threonine 64 is modified to Phosphothreonine. Residues 86 to 146 (QWKVGDKCSA…LSPACEVANN (61 aa)) form the Tudor domain. Residues 92–205 (KCSAVWSEDG…MSGSGLGPGK (114 aa)) form a required for interaction with RPP20/POP7 region. The segment at 148–216 (EQDTQENENE…GVKFSGPPPP (69 aa)) is disordered. Residues 157–180 (ESQISTDESENSSRSPGNKPNNIK) show a composition bias toward polar residues. Residue lysine 205 forms a Glycyl lysine isopeptide (Lys-Gly) (interchain with G-Cter in SUMO2) linkage. A P2 (binding site for SM B) region spans residues 234 to 261 (PPIIPPPPPICPDSLDDADALGSMLISW). The segment at 273–287 (GFKQNQKEGRCSHFN) is required for interaction with SYNCRIP.

The protein belongs to the SMN family. Homooligomer; may form higher order homooligomers in the dimer to octamer range. Part of the core SMN complex that contains SMN1, GEMIN2/SIP1, DDX20/GEMIN3, GEMIN4, GEMIN5, GEMIN6, GEMIN7, GEMIN8 and STRAP/UNRIP. Part of the SMN-Sm complex that contains SMN1, GEMIN2/SIP1, DDX20/GEMIN3, GEMIN4, GEMIN5, GEMIN6, GEMIN7, GEMIN8, STRAP/UNRIP and the Sm proteins SNRPB, SNRPD1, SNRPD2, SNRPD3, SNRPE, SNRPF and SNRPG. Component of an import snRNP complex composed of KPNB1, RNUT1, SMN1 and ZNF259. Interacts with DDX20, FBL, NOLA1, RNUT1, SYNCRIP and with several spliceosomal snRNP core Sm proteins, including SNRPB, SNRPD1, SNRPD2, SNRPD3, SNRPE and ILF3. Interacts with GEMIN2; the interaction is direct. Interacts with GEMIN3; the interaction is direct. Interacts with GEMIN8; the interaction is direct. Interacts with SNRPB; the interaction is direct. Interacts (via Tudor domain) with SNRPD1 (via C-terminus); the interaction is direct. Interacts with SNRPD2; the interaction is direct. Interacts (via Tudor domain) with SNRPD3 (via C-terminus); the interaction is direct. Interacts with SNRPE; the interaction is direct. Interacts with OSTF1, LSM10, LSM11 and RPP20/POP7. Interacts (via C-terminal region) with ZPR1 (via C-terminal region). Interacts (via Tudor domain) with COIL. Interacts with SETX; recruits SETX to POLR2A. Interacts with POLR2A (via the C-terminal domain (CTD)). Interacts with PRMT5. Interacts with XRN2. Interacts (via C-terminus) with FMR1 (via C-terminus); the interaction is direct and occurs in a RNA-independent manner. Interacts (via Tudor domain) with SF3B2 ('Arg-508'-methylated form). Interacts with WRAP53/TCAB1. Interacts (via Tudor domain) with ELAVL4 in an RNA-independent manner; the interaction is required for localization of ELAVL4 to RNA granules. Interacts with FRG1.

It localises to the nucleus. It is found in the gem. The protein localises to the cajal body. The protein resides in the cytoplasm. Its subcellular location is the cytoplasmic granule. It localises to the perikaryon. It is found in the cell projection. The protein localises to the neuron projection. The protein resides in the axon. Its subcellular location is the myofibril. It localises to the sarcomere. It is found in the z line. In terms of biological role, the SMN complex catalyzes the assembly of small nuclear ribonucleoproteins (snRNPs), the building blocks of the spliceosome, and thereby plays an important role in the splicing of cellular pre-mRNAs. Most spliceosomal snRNPs contain a common set of Sm proteins SNRPB, SNRPD1, SNRPD2, SNRPD3, SNRPE, SNRPF and SNRPG that assemble in a heptameric protein ring on the Sm site of the small nuclear RNA to form the core snRNP (Sm core). In the cytosol, the Sm proteins SNRPD1, SNRPD2, SNRPE, SNRPF and SNRPG are trapped in an inactive 6S pICln-Sm complex by the chaperone CLNS1A that controls the assembly of the core snRNP. To assemble core snRNPs, the SMN complex accepts the trapped 5Sm proteins from CLNS1A forming an intermediate. Binding of snRNA inside 5Sm ultimately triggers eviction of the SMN complex, thereby allowing binding of SNRPD3 and SNRPB to complete assembly of the core snRNP. Within the SMN complex, SMN1 acts as a structural backbone and together with GEMIN2 it gathers the Sm complex subunits. Ensures the correct splicing of U12 intron-containing genes that may be important for normal motor and proprioceptive neurons development. Also required for resolving RNA-DNA hybrids created by RNA polymerase II, that form R-loop in transcription terminal regions, an important step in proper transcription termination. May also play a role in the metabolism of small nucleolar ribonucleoprotein (snoRNPs). This is Survival motor neuron protein (SMN1) from Canis lupus familiaris (Dog).